Consider the following 979-residue polypeptide: MSIKLFSLAKELNVGVGSLAGFLRKKGFDVEDNNPNVRIENEEFDLLLTEFGKSLPKGEAERIRKKFVKQKQGTPASAPSAKEETAGMAAKEAQVIATEVPQDMRPRFTIKGKVETEKPAEPVPSPKDKEPDTVREDKPARETAPVKEETKVVPVKEDKPKEEKPKQEEPKREEPKPEEPVQAAPVAKPVEKPVDKPQQPVMTQKPQEAETPPPAQEMEKKEDTEEVFRLKTNTQEPQVKVVGKIDLSSINSSTRPKKKTKEDRQREQNDADGKKKRKRINKAAVDVKKEAAKVSGEQGKRNAGGGNHSSGNKNNNRPAQQQSNASGGRKNNKRQSLPPKVEISDEDVQRQVKETLARLTTKKTSTTLGRGAKYRKDKRDAASRAAQDAMELNSEEQHTLKLTEFVTVSDLSNMMDVPVNEVIATCMSIGMMVGINQRLDAETINIVAEEFGFKTEFVSADLVEAIAPEEDNEEDLVARPPIVTVMGHVDHGKTSLLDRIRNTNVIEGEAGGITQHIGAYGLKLPSGRRITFLDTPGHEAFTAMRARGAKITDIAIIIVAADDDVMPQTVEAINHASAAGVPMVFAINKIDKPAANPERIKEQLANMNYLVEDWGGKYQSQEISAKKGINITELLEKVLLEADILELKANPNRRAIGSIIESSLDKGRGYVSTVMVQNGTLNMGDVVLAGTCHGRIKAMFNERNQRVKQAGPSEPVLILGLNGAPAAGDTFNVLETEQEAREIANRREQLQREQGLRTHKILTLEDISRRRAIGNFQELNLIVKGDVDGSVEALSDSLIRLSTEEIQVNVIHKAVGQISESDVVLAAASSAIIIGFQVRPSVAARKQAETDGVEIRTYSIIYDTIEDIKSAMEGMLSPEIREEVTGSLEVLQTFKISKVGTIAGCMVKEGKVKRTSKVRLIRDGIVIHTGELGSLKRFKDDAKEVVAGLECGLNLAHSNDIQDGDIIEAFDEIEIKKTL.

Residues 68 to 386 are disordered; the sequence is VKQKQGTPAS…DKRDAASRAA (319 aa). Basic and acidic residues-rich tracts occupy residues 102–179, 217–229, and 260–273; these read QDMR…KPEE, EMEKKEDTEEVFR, and TKEDRQREQNDADG. The span at 317–326 shows a compositional bias: polar residues; it reads RPAQQQSNAS. The segment covering 347–356 has biased composition (basic and acidic residues); it reads DVQRQVKETL. One can recognise a tr-type G domain in the interval 478–646; the sequence is ARPPIVTVMG…KVLLEADILE (169 aa). The segment at 487–494 is G1; sequence GHVDHGKT. Residue 487 to 494 coordinates GTP; sequence GHVDHGKT. Residues 512-516 form a G2 region; sequence GITQH. The tract at residues 534–537 is G3; the sequence is DTPG. Residues 534–538 and 588–591 each bind GTP; these read DTPGH and NKID. Positions 588–591 are G4; that stretch reads NKID. Positions 624–626 are G5; sequence SAK.

This sequence belongs to the TRAFAC class translation factor GTPase superfamily. Classic translation factor GTPase family. IF-2 subfamily.

The protein resides in the cytoplasm. One of the essential components for the initiation of protein synthesis. Protects formylmethionyl-tRNA from spontaneous hydrolysis and promotes its binding to the 30S ribosomal subunits. Also involved in the hydrolysis of GTP during the formation of the 70S ribosomal complex. The sequence is that of Translation initiation factor IF-2 from Porphyromonas gingivalis (strain ATCC BAA-308 / W83).